We begin with the raw amino-acid sequence, 96 residues long: Pyrimidine/purine nucleoside phosphorylase (96 aa).

This sequence belongs to the nucleoside phosphorylase PpnP family.

It carries out the reaction a purine D-ribonucleoside + phosphate = a purine nucleobase + alpha-D-ribose 1-phosphate. The enzyme catalyses adenosine + phosphate = alpha-D-ribose 1-phosphate + adenine. It catalyses the reaction cytidine + phosphate = cytosine + alpha-D-ribose 1-phosphate. The catalysed reaction is guanosine + phosphate = alpha-D-ribose 1-phosphate + guanine. It carries out the reaction inosine + phosphate = alpha-D-ribose 1-phosphate + hypoxanthine. The enzyme catalyses thymidine + phosphate = 2-deoxy-alpha-D-ribose 1-phosphate + thymine. It catalyses the reaction uridine + phosphate = alpha-D-ribose 1-phosphate + uracil. The catalysed reaction is xanthosine + phosphate = alpha-D-ribose 1-phosphate + xanthine. Its function is as follows. Catalyzes the phosphorolysis of diverse nucleosides, yielding D-ribose 1-phosphate and the respective free bases. Can use uridine, adenosine, guanosine, cytidine, thymidine, inosine and xanthosine as substrates. Also catalyzes the reverse reactions. The protein is Pyrimidine/purine nucleoside phosphorylase of Serratia proteamaculans (strain 568).